Here is a 147-residue protein sequence, read N- to C-terminus: MSASSPSSAAPDDVEEGLVLRPKFDANGLITCVTTDATSGDVLMVAFMNAEALQKTIDSGDAWYFSRSRAKLWRKGESSGLVQKVLEMRLDCDQDAVWIKVEQGGGAACHTGRRSCFYRRIDRDDTGAPLLTPVDAERLFDPAKVYR.

D91 serves as a coordination point for Mg(2+). C92 is a Zn(2+) binding site. The Mg(2+) site is built by D93 and D95. Zn(2+) contacts are provided by C109 and C116.

It belongs to the PRA-CH family. As to quaternary structure, homodimer. Requires Mg(2+) as cofactor. It depends on Zn(2+) as a cofactor.

Its subcellular location is the cytoplasm. It carries out the reaction 1-(5-phospho-beta-D-ribosyl)-5'-AMP + H2O = 1-(5-phospho-beta-D-ribosyl)-5-[(5-phospho-beta-D-ribosylamino)methylideneamino]imidazole-4-carboxamide. It functions in the pathway amino-acid biosynthesis; L-histidine biosynthesis; L-histidine from 5-phospho-alpha-D-ribose 1-diphosphate: step 3/9. Its function is as follows. Catalyzes the hydrolysis of the adenine ring of phosphoribosyl-AMP. This is Phosphoribosyl-AMP cyclohydrolase from Rhodopseudomonas palustris (strain BisA53).